The chain runs to 609 residues: Pogo transposable element with KRAB domain (609 aa).

Disordered regions lie at residues 1 to 28 (MESTAYPLNLSLKEEEEEEEIQSRELED) and 100 to 127 (EGEEESQNSDEWQLQGGTSAENEESDVK). Residues 8-28 (LNLSLKEEEEEEEIQSRELED) are a coiled coil. A Glycyl lysine isopeptide (Lys-Gly) (interchain with G-Cter in SUMO2) cross-link involves residue Lys13. Positions 47-118 (ALFDEVAIYF…DEWQLQGGTS (72 aa)) constitute a KRAB domain. Residues 108–119 (SDEWQLQGGTSA) show a composition bias toward polar residues. Residues 250–323 (AFRGPKNGRF…MRRYDLSLRH (74 aa)) enclose the HTH CENPB-type domain. A DDE-1 domain is found at 353-567 (HDYEVAQMGN…ISSESIVQGF (215 aa)). Lys384 participates in a covalent cross-link: Glycyl lysine isopeptide (Lys-Gly) (interchain with G-Cter in SUMO2). The segment at 588–609 (SELPGGGEPPKDCDTESMAESN) is disordered.

It localises to the nucleus. The chain is Pogo transposable element with KRAB domain (POGK) from Homo sapiens (Human).